The primary structure comprises 127 residues: Thioredoxin domain-containing protein 8 (127 aa).

The Thioredoxin domain occupies 2 to 127; the sequence is VQKIKSMREF…KLEEKIQELM (126 aa). Cysteines 32 and 35 form a disulfide.

Belongs to the thioredoxin family. In terms of tissue distribution, testis-specific. Expressed in spermatozoa, sperm tail, elongated and round spermatids.

The protein resides in the cytoplasm. It is found in the golgi apparatus. Its function is as follows. May be required for post-translational modifications of proteins required for acrosomal biogenesis. May act by reducing disulfide bonds within the sperm. This is Thioredoxin domain-containing protein 8 (Txndc8) from Rattus norvegicus (Rat).